Consider the following 966-residue polypeptide: Alanine--tRNA ligase, cytoplasmic (966 aa).

4 residues coordinate Zn(2+): His-604, His-608, Cys-723, and His-727.

It belongs to the class-II aminoacyl-tRNA synthetase family. Monomer. Requires Zn(2+) as cofactor.

The protein localises to the cytoplasm. The enzyme catalyses tRNA(Ala) + L-alanine + ATP = L-alanyl-tRNA(Ala) + AMP + diphosphate. Its function is as follows. Catalyzes the attachment of alanine to tRNA(Ala) in a two-step reaction: alanine is first activated by ATP to form Ala-AMP and then transferred to the acceptor end of tRNA(Ala). Also edits incorrectly charged tRNA(Ala) via its editing domain. The polypeptide is Alanine--tRNA ligase, cytoplasmic (Drosophila melanogaster (Fruit fly)).